Consider the following 427-residue polypeptide: MKLRTKAKALRGRLRVPGDKSISHRAVIFGAIAEGQTVIHGLLRGQDVLATIQAFRDLGVTIYESADSLIIEGRGFKGLKPAQKPLDMGNSGTSMRLLAGLLAAQDFSVQLFGDDSLSRRPMDRITIPLSLMGAELSGQGEKELPPLIVKGCQGLRPIHYQLPVASAQVKSAILLAALQTQGETVILEKELTRNHTEEMIEQFGGKLSVAGKQISIKGPQRLQGQTLQIPGDLSSAAFWLAAGLIVPGSDLVLENVGINPTRTGLLEVIEKMGGQLSYQAVDKDIQTATLKVSYSTLKGIEISGDLIPRLIDELPVIALLATQAQGTTYIRDAQELRVKETDRIQAVTDVLGQMGADIQATEDGMVIRGKTPLHGAAVSTCGDHRIGMMTAIAALLVEEGQVTLERAEAILTSYPDFFKDLERLWHD.

The 3-phosphoshikimate site is built by Lys20, Ser21, and Arg25. Phosphoenolpyruvate is bound at residue Lys20. Positions 92 and 120 each coordinate phosphoenolpyruvate. The 3-phosphoshikimate site is built by Ser166, Gln168, Asp312, and Lys339. A phosphoenolpyruvate-binding site is contributed by Gln168. The active-site Proton acceptor is the Asp312. Positions 343 and 385 each coordinate phosphoenolpyruvate.

This sequence belongs to the EPSP synthase family. Monomer.

The protein resides in the cytoplasm. The catalysed reaction is 3-phosphoshikimate + phosphoenolpyruvate = 5-O-(1-carboxyvinyl)-3-phosphoshikimate + phosphate. It functions in the pathway metabolic intermediate biosynthesis; chorismate biosynthesis; chorismate from D-erythrose 4-phosphate and phosphoenolpyruvate: step 6/7. Its function is as follows. Catalyzes the transfer of the enolpyruvyl moiety of phosphoenolpyruvate (PEP) to the 5-hydroxyl of shikimate-3-phosphate (S3P) to produce enolpyruvyl shikimate-3-phosphate and inorganic phosphate. This Streptococcus equi subsp. zooepidemicus (strain MGCS10565) protein is 3-phosphoshikimate 1-carboxyvinyltransferase.